Reading from the N-terminus, the 422-residue chain is UDP-N-acetylglucosamine 1-carboxyvinyltransferase (422 aa).

22–23 (KN) contacts phosphoenolpyruvate. Arginine 93 is a UDP-N-acetyl-alpha-D-glucosamine binding site. Cysteine 117 acts as the Proton donor in catalysis. Residue cysteine 117 is modified to 2-(S-cysteinyl)pyruvic acid O-phosphothioketal. UDP-N-acetyl-alpha-D-glucosamine is bound by residues 122 to 126 (RPVDQ), aspartate 305, and isoleucine 327.

Belongs to the EPSP synthase family. MurA subfamily.

Its subcellular location is the cytoplasm. The enzyme catalyses phosphoenolpyruvate + UDP-N-acetyl-alpha-D-glucosamine = UDP-N-acetyl-3-O-(1-carboxyvinyl)-alpha-D-glucosamine + phosphate. Its pathway is cell wall biogenesis; peptidoglycan biosynthesis. Cell wall formation. Adds enolpyruvyl to UDP-N-acetylglucosamine. The protein is UDP-N-acetylglucosamine 1-carboxyvinyltransferase of Bordetella petrii (strain ATCC BAA-461 / DSM 12804 / CCUG 43448).